Consider the following 957-residue polypeptide: Glycine dehydrogenase (decarboxylating) (957 aa).

N6-(pyridoxal phosphate)lysine is present on Lys708.

It belongs to the GcvP family. In terms of assembly, the glycine cleavage system is composed of four proteins: P, T, L and H. Pyridoxal 5'-phosphate is required as a cofactor.

The catalysed reaction is N(6)-[(R)-lipoyl]-L-lysyl-[glycine-cleavage complex H protein] + glycine + H(+) = N(6)-[(R)-S(8)-aminomethyldihydrolipoyl]-L-lysyl-[glycine-cleavage complex H protein] + CO2. In terms of biological role, the glycine cleavage system catalyzes the degradation of glycine. The P protein binds the alpha-amino group of glycine through its pyridoxal phosphate cofactor; CO(2) is released and the remaining methylamine moiety is then transferred to the lipoamide cofactor of the H protein. This chain is Glycine dehydrogenase (decarboxylating), found in Shigella flexneri.